Here is a 42-residue protein sequence, read N- to C-terminus: Photosystem II reaction center protein J (42 aa).

The helical transmembrane segment at 10-30 (IPLWLVGTVVGLLAIGLLALF) threads the bilayer.

Belongs to the PsbJ family. In terms of assembly, PSII is composed of 1 copy each of membrane proteins PsbA, PsbB, PsbC, PsbD, PsbE, PsbF, PsbH, PsbI, PsbJ, PsbK, PsbL, PsbM, PsbT, PsbX, PsbY, PsbZ, Psb30/Ycf12, at least 3 peripheral proteins of the oxygen-evolving complex and a large number of cofactors. It forms dimeric complexes.

It is found in the plastid. The protein resides in the chloroplast thylakoid membrane. In terms of biological role, one of the components of the core complex of photosystem II (PSII). PSII is a light-driven water:plastoquinone oxidoreductase that uses light energy to abstract electrons from H(2)O, generating O(2) and a proton gradient subsequently used for ATP formation. It consists of a core antenna complex that captures photons, and an electron transfer chain that converts photonic excitation into a charge separation. This is Photosystem II reaction center protein J from Mesostigma viride (Green alga).